The following is a 518-amino-acid chain: Stage V sporulation protein B (518 aa).

The next 14 membrane-spanning stretches (helical) occupy residues 6–26 (FLKGTLILIAAGMVTRMLGFV), 45–65 (MAAPTFFLATTLTQFGLPVAI), 91–111 (ITGVLSLIFTPLFLFFAPVMA), 120–140 (TLYPLLAITPVVPIIAISSVL), 165–185 (ISLVAVCTTIFLPYGIEYAAA), 186–206 (GAMLSSVAGELASLLYLFVCF), 250–270 (WFFEPIVVAQSLAIAGVATVA), 281–301 (FAMTLLTLPSFITYSLSTALV), 326–346 (LCLLSGGISVVILFVFADELM), 348–368 (VMYGSSGAAVFIKVMAPFFLL), 387–407 (AAMMNSLIGALVKTGLIFVLA), 411–431 (SLGIMGAALAIVTGMVLVTLL), 446–466 (IKEYALSFAVIVICGFISSAI), and 478–498 (VNLAGWIAASAAIYMILLLVF).

The protein belongs to the polysaccharide synthase family.

The protein localises to the cell membrane. Its function is as follows. Involved, directly or indirectly, in spore cortex biosynthesis. Affects only indirectly the expression of late sporulation genes. This Bacillus subtilis (strain 168) protein is Stage V sporulation protein B (spoVB).